Reading from the N-terminus, the 100-residue chain is Small ribosomal subunit protein uS14c (100 aa).

This sequence belongs to the universal ribosomal protein uS14 family. As to quaternary structure, part of the 30S ribosomal subunit.

The protein localises to the plastid. Binds 16S rRNA, required for the assembly of 30S particles. The sequence is that of Small ribosomal subunit protein uS14c from Euglena longa (Euglenophycean alga).